Reading from the N-terminus, the 211-residue chain is Interleukin-6 (211 aa).

A signal peptide spans 1-29 (MNSLSTSAFSPVAFSLGLLLVMATAFPTP). The cysteines at positions 71 and 77 are disulfide-linked. Position 80 is a phosphoserine (S80). A disulfide bridge connects residues C100 and C110.

This sequence belongs to the IL-6 superfamily. Component of a hexamer of two molecules each of IL6, IL6R and IL6ST; first binds to IL6R to associate with the signaling subunit IL6ST. Interacts with IL6R (via the N-terminal ectodomain); this interaction may be affected by IL6R-binding with SORL1, hence decreasing IL6 cis signaling. Interacts with SORL1 (via the N-terminal ectodomain); this interaction leads to IL6 internalization and lysosomal degradation. May form a trimeric complex with the soluble SORL1 ectodomain and soluble IL6R receptor; this interaction might stabilize circulating IL6, hence promoting IL6 trans signaling.

Its subcellular location is the secreted. Functionally, cytokine with a wide variety of biological functions in immunity, tissue regeneration, and metabolism. Binds to IL6R, then the complex associates to the signaling subunit IL6ST/gp130 to trigger the intracellular IL6-signaling pathway. The interaction with the membrane-bound IL6R and IL6ST stimulates 'classic signaling', whereas the binding of IL6 and soluble IL6R to IL6ST stimulates 'trans-signaling'. Alternatively, 'cluster signaling' occurs when membrane-bound IL6:IL6R complexes on transmitter cells activate IL6ST receptors on neighboring receiver cells. IL6 is a potent inducer of the acute phase response. Rapid production of IL6 contributes to host defense during infection and tissue injury, but excessive IL6 synthesis is involved in disease pathology. In the innate immune response, is synthesized by myeloid cells, such as macrophages and dendritic cells, upon recognition of pathogens through toll-like receptors (TLRs) at the site of infection or tissue injury. In the adaptive immune response, is required for the differentiation of B cells into immunoglobulin-secreting cells. Plays a major role in the differentiation of CD4(+) T cell subsets. Essential factor for the development of T follicular helper (Tfh) cells that are required for the induction of germinal-center formation. Required to drive naive CD4(+) T cells to the Th17 lineage. Also required for proliferation of myeloma cells and the survival of plasmablast cells. Its function is as follows. Acts as an essential factor in bone homeostasis and on vessels directly or indirectly by induction of VEGF, resulting in increased angiogenesis activity and vascular permeability. Induces, through 'trans-signaling' and synergistically with IL1B and TNF, the production of VEGF. Involved in metabolic controls, is discharged into the bloodstream after muscle contraction increasing lipolysis and improving insulin resistance. 'Trans-signaling' in central nervous system also regulates energy and glucose homeostasis. Mediates, through GLP-1, crosstalk between insulin-sensitive tissues, intestinal L cells and pancreatic islets to adapt to changes in insulin demand. Also acts as a myokine. Plays a protective role during liver injury, being required for maintenance of tissue regeneration. Also has a pivotal role in iron metabolism by regulating HAMP/hepcidin expression upon inflammation or bacterial infection. Through activation of IL6ST-YAP-NOTCH pathway, induces inflammation-induced epithelial regeneration. The polypeptide is Interleukin-6 (IL6) (Camelus bactrianus (Bactrian camel)).